Here is a 160-residue protein sequence, read N- to C-terminus: Major strawberry allergen Fra a 1-D (160 aa).

Belongs to the BetVI family. As to quaternary structure, monomer.

This Fragaria ananassa (Strawberry) protein is Major strawberry allergen Fra a 1-D.